The sequence spans 259 residues: 3-deoxy-manno-octulosonate cytidylyltransferase (259 aa).

It belongs to the KdsB family.

The protein resides in the cytoplasm. It catalyses the reaction 3-deoxy-alpha-D-manno-oct-2-ulosonate + CTP = CMP-3-deoxy-beta-D-manno-octulosonate + diphosphate. It participates in nucleotide-sugar biosynthesis; CMP-3-deoxy-D-manno-octulosonate biosynthesis; CMP-3-deoxy-D-manno-octulosonate from 3-deoxy-D-manno-octulosonate and CTP: step 1/1. It functions in the pathway bacterial outer membrane biogenesis; lipopolysaccharide biosynthesis. Its function is as follows. Activates KDO (a required 8-carbon sugar) for incorporation into bacterial lipopolysaccharide in Gram-negative bacteria. This is 3-deoxy-manno-octulosonate cytidylyltransferase from Xanthomonas euvesicatoria pv. vesicatoria (strain 85-10) (Xanthomonas campestris pv. vesicatoria).